The following is a 229-amino-acid chain: Flagellar L-ring protein (229 aa).

The N-terminal stretch at 1–25 (MKQVRLPSSATVRAACAVAVAALAG) is a signal peptide. Residue Cys26 is the site of N-palmitoyl cysteine attachment. Cys26 is lipidated: S-diacylglycerol cysteine.

It belongs to the FlgH family. The basal body constitutes a major portion of the flagellar organelle and consists of four rings (L,P,S, and M) mounted on a central rod.

It is found in the cell outer membrane. The protein localises to the bacterial flagellum basal body. Assembles around the rod to form the L-ring and probably protects the motor/basal body from shearing forces during rotation. In Burkholderia cenocepacia (strain ATCC BAA-245 / DSM 16553 / LMG 16656 / NCTC 13227 / J2315 / CF5610) (Burkholderia cepacia (strain J2315)), this protein is Flagellar L-ring protein.